The following is a 257-amino-acid chain: Ribonuclease PH (257 aa).

Phosphate contacts are provided by residues R86 and 124–126; that span reads GTR.

This sequence belongs to the RNase PH family. In terms of assembly, homohexameric ring arranged as a trimer of dimers.

It carries out the reaction tRNA(n+1) + phosphate = tRNA(n) + a ribonucleoside 5'-diphosphate. Its function is as follows. Phosphorolytic 3'-5' exoribonuclease that plays an important role in tRNA 3'-end maturation. Removes nucleotide residues following the 3'-CCA terminus of tRNAs; can also add nucleotides to the ends of RNA molecules by using nucleoside diphosphates as substrates, but this may not be physiologically important. Probably plays a role in initiation of 16S rRNA degradation (leading to ribosome degradation) during starvation. The protein is Ribonuclease PH of Sulfurihydrogenibium sp. (strain YO3AOP1).